A 115-amino-acid chain; its full sequence is Succinate dehydrogenase assembly factor 3, mitochondrial (115 aa).

Belongs to the complex I LYR family. SDHAF3 subfamily. As to quaternary structure, interacts with sdh2 within an sdh1-sdh2 subcomplex.

It is found in the mitochondrion matrix. Plays an essential role in the assembly of succinate dehydrogenase (SDH), an enzyme complex (also referred to as respiratory complex II) that is a component of both the tricarboxylic acid (TCA) cycle and the mitochondrial electron transport chain, and which couples the oxidation of succinate to fumarate with the reduction of ubiquinone (coenzyme Q) to ubiquinol. Promotes maturation of the iron-sulfur protein subunit sdh2 of the SDH catalytic dimer, protecting it from the deleterious effects of oxidants. May act together with SDHAF1. The sequence is that of Succinate dehydrogenase assembly factor 3, mitochondrial from Schizosaccharomyces pombe (strain 972 / ATCC 24843) (Fission yeast).